Reading from the N-terminus, the 176-residue chain is Inner membrane-spanning protein YciB (176 aa).

Transmembrane regions (helical) follow at residues 3 to 23 (FLFD…WGIF), 24 to 44 (TATA…AFRH), 49 to 69 (TMLW…LVLH), 81 to 101 (LYWL…NNLI), 121 to 141 (VAWA…VHNF), and 149 to 169 (FKLF…SLWL).

The protein belongs to the YciB family.

Its subcellular location is the cell inner membrane. Its function is as follows. Plays a role in cell envelope biogenesis, maintenance of cell envelope integrity and membrane homeostasis. The protein is Inner membrane-spanning protein YciB of Burkholderia lata (strain ATCC 17760 / DSM 23089 / LMG 22485 / NCIMB 9086 / R18194 / 383).